Reading from the N-terminus, the 81-residue chain is Cytochrome c oxidase subunit 7B2, mitochondrial (81 aa).

A mitochondrion-targeting transit peptide spans 1 to 25; that stretch reads MMFPLARNALSSLKIRSILQSMARQ. The Mitochondrial matrix segment spans residues 26–33; the sequence is SHVKHSPD. Residues 34 to 60 traverse the membrane as a helical segment; sequence FHDKYGNAVLASGTAFCVVAWVFTATQ. Residues 61 to 81 lie on the Mitochondrial intermembrane side of the membrane; the sequence is IGIEWNLSPVGRVTPKEWKHQ.

The protein belongs to the cytochrome c oxidase VIIb family. In terms of assembly, component of the cytochrome c oxidase (complex IV, CIV), a multisubunit enzyme composed of 14 subunits. The complex is composed of a catalytic core of 3 subunits MT-CO1, MT-CO2 and MT-CO3, encoded in the mitochondrial DNA, and 11 supernumerary subunits COX4I, COX5A, COX5B, COX6A, COX6B, COX6C, COX7A, COX7B, COX7C, COX8 and NDUFA4, which are encoded in the nuclear genome. The complex exists as a monomer or a dimer and forms supercomplexes (SCs) in the inner mitochondrial membrane with NADH-ubiquinone oxidoreductase (complex I, CI) and ubiquinol-cytochrome c oxidoreductase (cytochrome b-c1 complex, complex III, CIII), resulting in different assemblies (supercomplex SCI(1)III(2)IV(1) and megacomplex MCI(2)III(2)IV(2)).

The protein localises to the mitochondrion inner membrane. The protein operates within energy metabolism; oxidative phosphorylation. Component of the cytochrome c oxidase, the last enzyme in the mitochondrial electron transport chain which drives oxidative phosphorylation. The respiratory chain contains 3 multisubunit complexes succinate dehydrogenase (complex II, CII), ubiquinol-cytochrome c oxidoreductase (cytochrome b-c1 complex, complex III, CIII) and cytochrome c oxidase (complex IV, CIV), that cooperate to transfer electrons derived from NADH and succinate to molecular oxygen, creating an electrochemical gradient over the inner membrane that drives transmembrane transport and the ATP synthase. Cytochrome c oxidase is the component of the respiratory chain that catalyzes the reduction of oxygen to water. Electrons originating from reduced cytochrome c in the intermembrane space (IMS) are transferred via the dinuclear copper A center (CU(A)) of subunit 2 and heme A of subunit 1 to the active site in subunit 1, a binuclear center (BNC) formed by heme A3 and copper B (CU(B)). The BNC reduces molecular oxygen to 2 water molecules using 4 electrons from cytochrome c in the IMS and 4 protons from the mitochondrial matrix. The sequence is that of Cytochrome c oxidase subunit 7B2, mitochondrial (COX7B2) from Macaca fascicularis (Crab-eating macaque).